Here is a 122-residue protein sequence, read N- to C-terminus: Flagellar hook-basal body complex protein FliE (122 aa).

It belongs to the FliE family.

It localises to the bacterial flagellum basal body. The chain is Flagellar hook-basal body complex protein FliE from Marinobacter nauticus (strain ATCC 700491 / DSM 11845 / VT8) (Marinobacter aquaeolei).